An 894-amino-acid polypeptide reads, in one-letter code: Peroxisomal hydratase-dehydrogenase-epimerase (894 aa).

2 short-chain dehydrogenase like regions span residues arginine 6–asparagine 230 and aspartate 311–lysine 523. Residues valine 14, lysine 53, asparagine 99, arginine 132, tyrosine 164, lysine 168, and alanine 197 each coordinate NADP(+). Residue tyrosine 164 is the Proton acceptor of the active site. Catalysis depends on lysine 168, which acts as the Lowers pKa of active site Tyr. Tyrosine 458 functions as the Proton acceptor in the catalytic mechanism. Residues histidine 693, glycine 694, and lysine 723 each contribute to the (3R)-3-hydroxydecanoyl-CoA site. The tract at residues lysine 763–proline 782 is disordered. A MaoC-like domain is found at lysine 776–serine 887. The (3R)-3-hydroxydecanoyl-CoA site is built by aspartate 803, asparagine 805, glycine 826, phenylalanine 851, and glycine 853.

This sequence belongs to the short-chain dehydrogenases/reductases (SDR) family. Monomer.

Its subcellular location is the peroxisome. It catalyses the reaction a (3R)-3-hydroxyacyl-CoA = a (2E)-enoyl-CoA + H2O. It carries out the reaction a (3R)-3-hydroxyacyl-CoA + NAD(+) = a 3-oxoacyl-CoA + NADH + H(+). It functions in the pathway lipid metabolism; fatty acid beta-oxidation. Second trifunctional enzyme acting on the beta-oxidation pathway for fatty acids, possessing hydratase-dehydrogenase-epimerase activities. Converts trans-2-enoyl-CoA via D-3-hydroxyacyl-CoA to 3-ketoacyl-CoA. The protein is Peroxisomal hydratase-dehydrogenase-epimerase (fox-2) of Neurospora crassa (strain ATCC 24698 / 74-OR23-1A / CBS 708.71 / DSM 1257 / FGSC 987).